Consider the following 138-residue polypeptide: Large ribosomal subunit protein uL11c (138 aa).

It belongs to the universal ribosomal protein uL11 family. Part of the ribosomal stalk of the 50S ribosomal subunit. Interacts with L10 and the large rRNA to form the base of the stalk. L10 forms an elongated spine to which L12 dimers bind in a sequential fashion forming a multimeric L10(L12)X complex.

The protein localises to the plastid. It localises to the chloroplast. Functionally, forms part of the ribosomal stalk which helps the ribosome interact with GTP-bound translation factors. The chain is Large ribosomal subunit protein uL11c from Cyanidioschyzon merolae (strain NIES-3377 / 10D) (Unicellular red alga).